The sequence spans 297 residues: Protein phosphatase PTC7 homolog (297 aa).

A mitochondrion-targeting transit peptide spans 1–27; that stretch reads MLSVLSYGRLVARAVIGGLSQTDSRDY. The region spanning 28-292 is the PPM-type phosphatase domain; it reads SLVSASFGFG…DDITVLLSIV (265 aa). Positions 71, 72, and 216 each coordinate Mn(2+).

It belongs to the PP2C family. It depends on Mg(2+) as a cofactor. Mn(2+) is required as a cofactor.

The protein localises to the mitochondrion matrix. The enzyme catalyses O-phospho-L-seryl-[protein] + H2O = L-seryl-[protein] + phosphate. It catalyses the reaction O-phospho-L-threonyl-[protein] + H2O = L-threonyl-[protein] + phosphate. In terms of biological role, protein phosphatase which positively regulates biosynthesis of the ubiquinone, coenzyme Q. Dephosphorylates the ubiquinone biosynthesis protein coq7 which is likely to lead to its activation. The protein is Protein phosphatase PTC7 homolog (pptc7) of Danio rerio (Zebrafish).